A 60-amino-acid polypeptide reads, in one-letter code: UPF0434 protein Spro_1718 (60 aa).

This sequence belongs to the UPF0434 family.

This is UPF0434 protein Spro_1718 from Serratia proteamaculans (strain 568).